Here is a 172-residue protein sequence, read N- to C-terminus: Ribosome maturation factor RimM (172 aa).

The PRC barrel domain maps to 98–171 (PGEYYYHQIV…KVIVELMEGL (74 aa)).

The protein belongs to the RimM family. In terms of assembly, binds ribosomal protein uS19.

Its subcellular location is the cytoplasm. In terms of biological role, an accessory protein needed during the final step in the assembly of 30S ribosomal subunit, possibly for assembly of the head region. Essential for efficient processing of 16S rRNA. May be needed both before and after RbfA during the maturation of 16S rRNA. It has affinity for free ribosomal 30S subunits but not for 70S ribosomes. This chain is Ribosome maturation factor RimM, found in Levilactobacillus brevis (strain ATCC 367 / BCRC 12310 / CIP 105137 / JCM 1170 / LMG 11437 / NCIMB 947 / NCTC 947) (Lactobacillus brevis).